The chain runs to 1121 residues: tRNA (34-2'-O)-methyltransferase regulator WDR6 (1121 aa).

Position 1 is an N-acetylmethionine (Met1). WD repeat units lie at residues 53 to 97, 105 to 143, 147 to 189, 200 to 238, 247 to 285, 289 to 327, 335 to 376, 381 to 422, 425 to 470, 476 to 520, 559 to 598, 604 to 642, 645 to 684, 739 to 785, 848 to 893, 901 to 946, 970 to 1012, 1036 to 1073, and 1079 to 1121; these read IKRV…VVKI, RELW…LYDP, CILQ…VWYP, APDR…IWKV, RVQN…VWSH, ILQA…LWHL, LGVS…LYDV, WEQL…VVPI, PTAA…ISAA, IFVK…LFPS, PVST…FVRD, VLRQ…VWNP, HEKL…LYRA, LTDI…VWGI, HNRH…LFLL, QLLA…FWDL, GTPS…VFVL, EEYS…FWRL, and TFMN…NWYD.

The protein belongs to the WD repeat WDR6 family. Interacts with FTSJ1; the interaction is direct, and required for 2'-O-methylation of position 34 in substrate tRNAs. Interacts with IRS4. Interacts with STK11/LKB1.

It is found in the cytoplasm. In terms of biological role, together with methyltransferase FTSJ1, methylates the 2'-O-ribose of nucleotides at position 34 of the tRNA anticodon loop of substrate tRNAs. Required for the correct positioning of the substrate tRNA for methylation. Required to suppress amino acid starvation-induced autophagy. Enhances the STK11/LKB1-induced cell growth suppression activity. The protein is tRNA (34-2'-O)-methyltransferase regulator WDR6 (WDR6) of Pongo abelii (Sumatran orangutan).